The sequence spans 93 residues: Auxin-responsive protein SAUR26 (93 aa).

This sequence belongs to the ARG7 family. In terms of assembly, interacts with PP2C-D1. As to expression, higher expression in thermo-responsive cultivars (e.g. cv. Alst-1, cv. Ang-0 and cv. Com-0) than in low thermo-responsive cultivars (e.g. cv. Dja-1, cv. El-0 and cv. Kon).

It is found in the cell membrane. In terms of biological role, provide a mechanistic link between auxin and plasma membrane H(+)-ATPases (PM H(+)-ATPases, e.g. AHA1 and AHA2), and triggers PM H(+)-ATPases activity by promoting phosphorylation of their C-terminal autoinhibitory domain as a result of PP2C-D subfamily of type 2C phosphatases inhibition, thus leading to the acidification of the apoplast and the facilitation of solutes and water uptake to drive cell expansion. Functions as a positive effectors of cell expansion through modulation of auxin transport. Involved in thermo-responsiveness of plant architecture. Enhances plasma membrane H(+)-ATPase. Probably involved in light intensity mediated root development. This Arabidopsis thaliana (Mouse-ear cress) protein is Auxin-responsive protein SAUR26.